A 379-amino-acid polypeptide reads, in one-letter code: Gap junction alpha-1 protein (379 aa).

Topologically, residues 2–23 (GDWSALGRLLDKVQAYSTAGGK) are cytoplasmic. The helical transmembrane segment at 24 to 44 (VWLSVLFIFRILLLGTAVESA) threads the bilayer. Topologically, residues 45–76 (WGDEQSAFVCNTQQPGCENVCYDKSFPISHVR) are extracellular. 2 cysteine pairs are disulfide-bonded: cysteine 54/cysteine 192 and cysteine 187/cysteine 198. The chain crosses the membrane as a helical span at residues 77–97 (FWVLQIIFVSTPTLLYLAHVF). Over 98–163 (YLMRKEEKLN…TYIISILFKS (66 aa)) the chain is Cytoplasmic. A helical membrane pass occupies residues 164 to 184 (VFEVGFIIIQWYMYGFSLSAI). The Extracellular segment spans residues 185-207 (YTCKRDPCPHQVDCFLSRPTEKT). A helical membrane pass occupies residues 208-228 (IFIWFMLIVSIVSLALNIIEL). Residues 229 to 379 (FYVTYKSIKD…SRPRPDDLEI (151 aa)) are Cytoplasmic-facing. A disordered region spans residues 322–379 (STISNTHAQPFDFSDEHQNTKKMAPGHEMQPLTILDQRPSSRASSHASSRPRPDDLEI). Over residues 359-371 (RPSSRASSHASSR) the composition is skewed to low complexity.

This sequence belongs to the connexin family. Alpha-type (group II) subfamily. As to quaternary structure, a connexon is composed of a hexamer of connexins. Interacts with TMEM65. Expressed in most tissues. Highest levels found in eye and brain.

It localises to the cell membrane. The protein resides in the cell junction. Its subcellular location is the gap junction. Its function is as follows. One gap junction consists of a cluster of closely packed pairs of transmembrane channels, the connexons, through which materials of low MW diffuse from one cell to a neighboring cell. Plays an essential role in gap junction communication in the ventricles. The polypeptide is Gap junction alpha-1 protein (gja1) (Xenopus laevis (African clawed frog)).